The chain runs to 163 residues: NADH-quinone oxidoreductase subunit I (163 aa).

2 consecutive 4Fe-4S ferredoxin-type domains span residues 53–83 (LRRY…IEAG) and 94–123 (VRYD…EGPN). [4Fe-4S] cluster is bound by residues cysteine 63, cysteine 66, cysteine 69, cysteine 73, cysteine 103, cysteine 106, cysteine 109, and cysteine 113.

Belongs to the complex I 23 kDa subunit family. NDH-1 is composed of 14 different subunits. Subunits NuoA, H, J, K, L, M, N constitute the membrane sector of the complex. [4Fe-4S] cluster serves as cofactor.

Its subcellular location is the cell inner membrane. It catalyses the reaction a quinone + NADH + 5 H(+)(in) = a quinol + NAD(+) + 4 H(+)(out). Its function is as follows. NDH-1 shuttles electrons from NADH, via FMN and iron-sulfur (Fe-S) centers, to quinones in the respiratory chain. The immediate electron acceptor for the enzyme in this species is believed to be ubiquinone. Couples the redox reaction to proton translocation (for every two electrons transferred, four hydrogen ions are translocated across the cytoplasmic membrane), and thus conserves the redox energy in a proton gradient. The chain is NADH-quinone oxidoreductase subunit I from Brucella canis (strain ATCC 23365 / NCTC 10854 / RM-666).